We begin with the raw amino-acid sequence, 319 residues long: Taste receptor type 2 member 39 (319 aa).

At 1–16 the chain is on the extracellular side; it reads MAQPSNYWKQDLLPLS. Residues 17–37 form a helical membrane-spanning segment; it reads ILILTLVATECTIGIIASGII. Over 38 to 56 the chain is Cytoplasmic; the sequence is TVVNAVSWVQKRAVSITTR. A helical membrane pass occupies residues 57–77; that stretch reads ILLLLSVSRIGLQSIILIEMT. At 78-97 the chain is on the extracellular side; the sequence is SSIFNFSSYNSVLYRVSRVS. N-linked (GlcNAc...) asparagine glycosylation is present at Asn82. The chain crosses the membrane as a helical span at residues 98-118; it reads FVFLNYCSLWFAALLSFFHFV. The Cytoplasmic portion of the chain corresponds to 119 to 137; sequence KIANFSYPLFFKLKWRISE. A helical transmembrane segment spans residues 138–158; the sequence is LMPWLLWLSVFISFSSSMFFC. Residues 159 to 187 lie on the Extracellular side of the membrane; it reads NHKYTVYNNISLSSNICNFTMELYVAEAN. 2 N-linked (GlcNAc...) asparagine glycosylation sites follow: Asn167 and Asn176. A helical transmembrane segment spans residues 188–208; it reads VVNVAFLFSFGILPPLTMFIA. The Cytoplasmic segment spans residues 209-247; sequence TATLLIFSLRRHTLHMRNGDADSRNPRVEAHKQAIKETS. The chain crosses the membrane as a helical span at residues 248-268; that stretch reads CFLFLYILYAAVLFLSTSNIA. Topologically, residues 269-273 are extracellular; that stretch reads DASLF. Residues 274–294 form a helical membrane-spanning segment; it reads WSSVLRISLPVYPAGHSVLLI. The Cytoplasmic segment spans residues 295–319; it reads QSNPGLKRTWKQLLSQIHLHLQSRY.

The protein belongs to the G-protein coupled receptor T2R family.

It localises to the membrane. In terms of biological role, putative taste receptor which may play a role in the perception of bitterness. This is Taste receptor type 2 member 39 from Rattus norvegicus (Rat).